A 590-amino-acid chain; its full sequence is Major surface protein MspTL (590 aa).

A signal peptide spans 1–19; that stretch reads MKKILAFFLVFALAGAVFA.

It is found in the cell outer membrane. Major component of the outer membrane. This is Major surface protein MspTL (mspTL) from Treponema lecithinolyticum.